The following is a 249-amino-acid chain: Probable transcriptional regulatory protein IL1088 (249 aa).

It belongs to the TACO1 family.

It localises to the cytoplasm. The chain is Probable transcriptional regulatory protein IL1088 from Idiomarina loihiensis (strain ATCC BAA-735 / DSM 15497 / L2-TR).